The sequence spans 331 residues: UPF0324 membrane protein YdhF (331 aa).

8 consecutive transmembrane segments (helical) span residues 2–20 (SILPGFLLSFAIAIVSYLL), 24–46 (IFHSLGSATIAILLGIILGNLYF), 82–104 (LGFSGVGFILIQMISTIIFVLFM), 114–136 (VSALMASGNAVCGSSAIAAVEPV), 148–170 (IAMVNLMGTILMLSLPFLGTWMF), 204–226 (TLATLFKIMRIIMLVFVVLYFGF), 247–269 (SFLPWYVLGFLVLCTLDTLIHFV), and 308–330 (LIYGLSTLVFQVVLALILISLLI).

This sequence belongs to the UPF0324 family.

It is found in the cell membrane. The polypeptide is UPF0324 membrane protein YdhF (ydhF) (Lactococcus lactis subsp. lactis (strain IL1403) (Streptococcus lactis)).